The following is a 435-amino-acid chain: Monodehydroascorbate reductase 2 (435 aa).

Residues 14 to 17, E41, R48, K53, I96, and 147 to 148 contribute to the FAD site; these read GGVA and RE. NAD(+) is bound by residues 172–178, E196, R202, and G261; that span reads GGYIGLE. NADP(+) is bound at residue 174 to 178; sequence YIGLE. NADP(+) is bound by residues R202 and G261. Residue D298 coordinates FAD. 314 to 315 is a binding site for NAD(+); it reads EH. Residue 314–315 coordinates NADP(+); sequence EH. Residue V316 coordinates FAD. R320 contributes to the L-ascorbate binding site. Residue Y349 participates in FAD binding. Residue Y349 coordinates NAD(+). Y349 contacts NADP(+). L-ascorbate is bound at residue R351. Residue S417 is modified to Phosphoserine.

Belongs to the FAD-dependent oxidoreductase family. Requires FAD as cofactor.

Its subcellular location is the cytoplasm. The catalysed reaction is 2 monodehydro-L-ascorbate radical + NADH + H(+) = 2 L-ascorbate + NAD(+). Its function is as follows. Catalyzes the conversion of monodehydroascorbate to ascorbate, oxidizing NADH in the process. This Arabidopsis thaliana (Mouse-ear cress) protein is Monodehydroascorbate reductase 2.